A 121-amino-acid chain; its full sequence is Small ribosomal subunit protein uS13 (121 aa).

The tract at residues 91-121 (HRKGLPLRGQRTRTNARTRKGPRKAGVALKK) is disordered.

It belongs to the universal ribosomal protein uS13 family. Part of the 30S ribosomal subunit. Forms a loose heterodimer with protein S19. Forms two bridges to the 50S subunit in the 70S ribosome.

Its function is as follows. Located at the top of the head of the 30S subunit, it contacts several helices of the 16S rRNA. In the 70S ribosome it contacts the 23S rRNA (bridge B1a) and protein L5 of the 50S subunit (bridge B1b), connecting the 2 subunits; these bridges are implicated in subunit movement. Contacts the tRNAs in the A and P-sites. This is Small ribosomal subunit protein uS13 from Cupriavidus pinatubonensis (strain JMP 134 / LMG 1197) (Cupriavidus necator (strain JMP 134)).